Here is a 159-residue protein sequence, read N- to C-terminus: Cyclic pyranopterin monophosphate synthase (159 aa).

Substrate-binding positions include 75–77 and 113–114; these read LCH and ME. Residue aspartate 128 is part of the active site.

The protein belongs to the MoaC family. In terms of assembly, homohexamer; trimer of dimers.

It catalyses the reaction (8S)-3',8-cyclo-7,8-dihydroguanosine 5'-triphosphate = cyclic pyranopterin phosphate + diphosphate. It participates in cofactor biosynthesis; molybdopterin biosynthesis. Its function is as follows. Catalyzes the conversion of (8S)-3',8-cyclo-7,8-dihydroguanosine 5'-triphosphate to cyclic pyranopterin monophosphate (cPMP). In Yersinia pseudotuberculosis serotype O:3 (strain YPIII), this protein is Cyclic pyranopterin monophosphate synthase.